The chain runs to 318 residues: Very-long-chain 3-oxoacyl-CoA reductase-A (318 aa).

Residues 15–35 form a helical membrane-spanning segment; the sequence is FWYLGVLAAAWWGLRAACCLL. 54–83 is an NADP(+) binding site; it reads GKWAVVTGATDGIGKAYAEELARRGMSIVL. Transmembrane regions (helical) follow at residues 187–207 and 281–301; these read GVIL…LTVY and AIMG…SMGM. Ser194 is a binding site for substrate. Tyr207 acts as the Proton acceptor in catalysis.

The protein belongs to the short-chain dehydrogenases/reductases (SDR) family. 17-beta-HSD 3 subfamily.

Its subcellular location is the endoplasmic reticulum membrane. The enzyme catalyses a very-long-chain (3R)-3-hydroxyacyl-CoA + NADP(+) = a very-long-chain 3-oxoacyl-CoA + NADPH + H(+). It carries out the reaction 17beta-estradiol + NAD(+) = estrone + NADH + H(+). It catalyses the reaction 17beta-estradiol + NADP(+) = estrone + NADPH + H(+). It functions in the pathway lipid metabolism; fatty acid biosynthesis. The protein operates within steroid biosynthesis; estrogen biosynthesis. Functionally, catalyzes the second of the four reactions of the long-chain fatty acids elongation cycle. This endoplasmic reticulum-bound enzymatic process, allows the addition of two carbons to the chain of long- and very long-chain fatty acids/VLCFAs per cycle. This enzyme has a 3-ketoacyl-CoA reductase activity, reducing 3-ketoacyl-CoA to 3-hydroxyacyl-CoA, within each cycle of fatty acid elongation. Thereby, it may participate in the production of VLCFAs of different chain lengths that are involved in multiple biological processes as precursors of membrane lipids and lipid mediators. May also catalyze the transformation of estrone (E1) into estradiol (E2) and play a role in estrogen formation. This is Very-long-chain 3-oxoacyl-CoA reductase-A (hsd17b12-a) from Xenopus laevis (African clawed frog).